The chain runs to 111 residues: Large ribosomal subunit protein uL23 (111 aa).

It belongs to the universal ribosomal protein uL23 family. In terms of assembly, part of the 50S ribosomal subunit. Contacts protein L29, and trigger factor when it is bound to the ribosome.

Its function is as follows. One of the early assembly proteins it binds 23S rRNA. One of the proteins that surrounds the polypeptide exit tunnel on the outside of the ribosome. Forms the main docking site for trigger factor binding to the ribosome. The chain is Large ribosomal subunit protein uL23 from Nitrosomonas europaea (strain ATCC 19718 / CIP 103999 / KCTC 2705 / NBRC 14298).